A 147-amino-acid chain; its full sequence is Endoribonuclease YbeY (147 aa).

Residues histidine 109, histidine 113, and histidine 119 each coordinate Zn(2+).

The protein belongs to the endoribonuclease YbeY family. Zn(2+) is required as a cofactor.

The protein resides in the cytoplasm. In terms of biological role, single strand-specific metallo-endoribonuclease involved in late-stage 70S ribosome quality control and in maturation of the 3' terminus of the 16S rRNA. This is Endoribonuclease YbeY from Magnetococcus marinus (strain ATCC BAA-1437 / JCM 17883 / MC-1).